The sequence spans 427 residues: UDP-N-acetylglucosamine 1-carboxyvinyltransferase (427 aa).

24-25 (KN) is a binding site for phosphoenolpyruvate. R95 is a UDP-N-acetyl-alpha-D-glucosamine binding site. The Proton donor role is filled by C119. Position 119 is a 2-(S-cysteinyl)pyruvic acid O-phosphothioketal (C119). UDP-N-acetyl-alpha-D-glucosamine-binding positions include 124-128 (RPVDQ), D308, and V330.

This sequence belongs to the EPSP synthase family. MurA subfamily.

The protein localises to the cytoplasm. The enzyme catalyses phosphoenolpyruvate + UDP-N-acetyl-alpha-D-glucosamine = UDP-N-acetyl-3-O-(1-carboxyvinyl)-alpha-D-glucosamine + phosphate. Its pathway is cell wall biogenesis; peptidoglycan biosynthesis. In terms of biological role, cell wall formation. Adds enolpyruvyl to UDP-N-acetylglucosamine. The protein is UDP-N-acetylglucosamine 1-carboxyvinyltransferase of Deinococcus geothermalis (strain DSM 11300 / CIP 105573 / AG-3a).